A 467-amino-acid polypeptide reads, in one-letter code: tRNA-2-methylthio-N(6)-dimethylallyladenosine synthase (467 aa).

In terms of domain architecture, MTTase N-terminal spans 15-135; it reads KKIFVKTYGC…LPEYVARLAN (121 aa). [4Fe-4S] cluster is bound by residues C24, C60, C98, C177, C181, and C184. The Radical SAM core domain maps to 163 to 395; sequence LARGATAFLT…QALLGEQQLA (233 aa). The region spanning 398–461 is the TRAM domain; that stretch reads AGCAGRTMPV…RNSLRGRLRE (64 aa).

Belongs to the methylthiotransferase family. MiaB subfamily. As to quaternary structure, monomer. [4Fe-4S] cluster is required as a cofactor.

It localises to the cytoplasm. The catalysed reaction is N(6)-dimethylallyladenosine(37) in tRNA + (sulfur carrier)-SH + AH2 + 2 S-adenosyl-L-methionine = 2-methylsulfanyl-N(6)-dimethylallyladenosine(37) in tRNA + (sulfur carrier)-H + 5'-deoxyadenosine + L-methionine + A + S-adenosyl-L-homocysteine + 2 H(+). In terms of biological role, catalyzes the methylthiolation of N6-(dimethylallyl)adenosine (i(6)A), leading to the formation of 2-methylthio-N6-(dimethylallyl)adenosine (ms(2)i(6)A) at position 37 in tRNAs that read codons beginning with uridine. The protein is tRNA-2-methylthio-N(6)-dimethylallyladenosine synthase of Parvibaculum lavamentivorans (strain DS-1 / DSM 13023 / NCIMB 13966).